Reading from the N-terminus, the 724-residue chain is NAD(+) hydrolase SARM1 (724 aa).

Residues 1 to 27 (MVLTLLLSAYKLCRFFAMSGPRPGAER) constitute a mitochondrion transit peptide. Residues 60-100 (EVQDALERALPELQQALSALKQAGGARAVGAGLAEVFQLVE) form an ARM 1 repeat. Residues W103, R110, 149–157 (EQILVAENR), and 190–193 (HMFK) contribute to the NAD(+) site. ARM repeat units lie at residues 114 to 153 (QGLC…QILV), 155 to 193 (ENRD…HMFK), 196 to 235 (EETC…NCAL), 237 to 280 (GGQA…LATN), 281 to 314 (KEVE…CLVD), 315 to 354 (ASDT…AEAA), and 359 to 402 (QGKT…EEVP). 2 SAM domains span residues 412–476 (WKEA…LKTF) and 486–548 (NLAD…MLHS). Phosphoserine is present on residues S548 and S558. The 144-residue stretch at 560–703 (DTPDVFISYR…KIIRFLQGRS (144 aa)) folds into the TIR domain. Residues 569–570 (RR) and E599 each bind NAD(+). Residue E642 is part of the active site. The segment at 704–724 (SRDSSAGSDTSLEGAAPMGPT) is disordered.

This sequence belongs to the SARM1 family. As to quaternary structure, homooctamer; forms an octameric ring via SAM domains. Interacts with TICAM1/TRIF and thereby interferes with TICAM1/TRIF function. Interacts with MAPK10/JNK3 and SDC2 (via cytoplasmic domain). In terms of processing, phosphorylation at Ser-548 by JNK kinases (MAPK8, MAPK9 and /or MAPK10) enhance the NAD(+) hydrolase (NADase) activity. Phosphorylation at Ser-548 and subsequent activation takes place in response to oxidative stress conditions and inhibits mitochondrial respiration. As to expression, predominantly expressed in brain, kidney and liver. Expressed at lower level in placenta.

Its subcellular location is the cytoplasm. The protein localises to the cell projection. The protein resides in the axon. It is found in the dendrite. It localises to the synapse. Its subcellular location is the mitochondrion. It carries out the reaction NAD(+) + H2O = ADP-D-ribose + nicotinamide + H(+). The enzyme catalyses NAD(+) = cyclic ADP-beta-D-ribose + nicotinamide + H(+). The catalysed reaction is NADP(+) + H2O = ADP-D-ribose 2'-phosphate + nicotinamide + H(+). With respect to regulation, autoinhibited: in the inactive state, the enzymatic TIR domain is held apart by the autoinhibiting ARM repeats. NAD(+)-binding to ARM repeats maintains an inactive state by promoting interaction between ARM repeats and the TIR domain, thereby facilitating inhibition of the enzymatic TIR domain. Following activation, possibly by nicotinamide mononucleotide (NMN), auto-inhibitory interactions are released, allowing self-association of the TIR domains and subsequent activation of the NAD(+) hydrolase (NADase) activity. Self-association of TIR domains is facilitated by the octamer of SAM domains. NAD(+) hydrolase activity is inhibited by nicotinamide. Specifically inhibited by berberine chloride and zinc chloride. Functionally, NAD(+) hydrolase, which plays a key role in axonal degeneration following injury by regulating NAD(+) metabolism. Acts as a negative regulator of MYD88- and TRIF-dependent toll-like receptor signaling pathway by promoting Wallerian degeneration, an injury-induced form of programmed subcellular death which involves degeneration of an axon distal to the injury site. Wallerian degeneration is triggered by NAD(+) depletion: in response to injury, SARM1 is activated and catalyzes cleavage of NAD(+) into ADP-D-ribose (ADPR), cyclic ADPR (cADPR) and nicotinamide; NAD(+) cleavage promoting cytoskeletal degradation and axon destruction. Also able to hydrolyze NADP(+), but not other NAD(+)-related molecules. Can activate neuronal cell death in response to stress. Regulates dendritic arborization through the MAPK4-JNK pathway. Involved in innate immune response: inhibits both TICAM1/TRIF- and MYD88-dependent activation of JUN/AP-1, TRIF-dependent activation of NF-kappa-B and IRF3, and the phosphorylation of MAPK14/p38. This Homo sapiens (Human) protein is NAD(+) hydrolase SARM1.